Here is a 345-residue protein sequence, read N- to C-terminus: Uroporphyrinogen decarboxylase (345 aa).

Substrate contacts are provided by residues 27–31 (RQAGR), Phe-46, Asp-76, Tyr-152, Ser-207, and His-321.

The protein belongs to the uroporphyrinogen decarboxylase family. As to quaternary structure, homodimer.

The protein localises to the cytoplasm. The catalysed reaction is uroporphyrinogen III + 4 H(+) = coproporphyrinogen III + 4 CO2. It participates in porphyrin-containing compound metabolism; protoporphyrin-IX biosynthesis; coproporphyrinogen-III from 5-aminolevulinate: step 4/4. Its function is as follows. Catalyzes the decarboxylation of four acetate groups of uroporphyrinogen-III to yield coproporphyrinogen-III. The polypeptide is Uroporphyrinogen decarboxylase (Staphylococcus aureus (strain Mu3 / ATCC 700698)).